Consider the following 271-residue polypeptide: Solute carrier family 66 member 2 (271 aa).

Helical transmembrane passes span 7-27 (GWLL…AMVF), 49-69 (FSTH…LFWF), and 72-92 (HFES…LLML). In terms of domain architecture, PQ-loop 1 spans 14–80 (HQLVSWVAAG…RHFESPLLWQ (67 aa)). Position 110 is a phosphoserine (Ser-110). 3 helical membrane-spanning segments follow: residues 143–163 (FADY…ITYL), 168–188 (ALFV…LGVP), and 232–252 (VCGL…YAFA). Positions 149–215 (CVLAFTGVAG…MVLMWTSGDT (67 aa)) constitute a PQ-loop 2 domain.

The protein localises to the membrane. This chain is Solute carrier family 66 member 2 (Slc66a2), found in Rattus norvegicus (Rat).